Here is a 307-residue protein sequence, read N- to C-terminus: Elongation factor Ts (307 aa).

The involved in Mg(2+) ion dislocation from EF-Tu stretch occupies residues 80 to 83 (TDFV).

The protein belongs to the EF-Ts family.

It localises to the cytoplasm. Functionally, associates with the EF-Tu.GDP complex and induces the exchange of GDP to GTP. It remains bound to the aminoacyl-tRNA.EF-Tu.GTP complex up to the GTP hydrolysis stage on the ribosome. The polypeptide is Elongation factor Ts (Clostridium botulinum (strain Loch Maree / Type A3)).